A 402-amino-acid chain; its full sequence is DNA polymerase IV (402 aa).

Positions 5 to 187 (ILLADMNSFY…LPVRELFGVG (183 aa)) constitute a UmuC domain. The Mg(2+) site is built by D9 and D105. The active site involves E106.

This sequence belongs to the DNA polymerase type-Y family. In terms of assembly, monomer. Mg(2+) serves as cofactor.

The protein resides in the cytoplasm. It carries out the reaction DNA(n) + a 2'-deoxyribonucleoside 5'-triphosphate = DNA(n+1) + diphosphate. Poorly processive, error-prone DNA polymerase involved in untargeted mutagenesis. Copies undamaged DNA at stalled replication forks, which arise in vivo from mismatched or misaligned primer ends. These misaligned primers can be extended by PolIV. Exhibits no 3'-5' exonuclease (proofreading) activity. May be involved in translesional synthesis, in conjunction with the beta clamp from PolIII. This is DNA polymerase IV from Pelotomaculum thermopropionicum (strain DSM 13744 / JCM 10971 / SI).